The following is a 227-amino-acid chain: Acyl-protein thioesterase 1 (227 aa).

Active-site charge relay system residues include serine 119, aspartate 173, and histidine 207.

This sequence belongs to the AB hydrolase superfamily. AB hydrolase 2 family.

It localises to the cytoplasm. Its subcellular location is the nucleus. It carries out the reaction S-hexadecanoyl-L-cysteinyl-[protein] + H2O = L-cysteinyl-[protein] + hexadecanoate + H(+). Its function is as follows. Hydrolyzes fatty acids from S-acylated cysteine residues in proteins with a strong preference for palmitoylated G-alpha proteins over other acyl substrates. Mediates the deacylation of G-alpha proteins such as GPA1 in vivo, but has weak or no activity toward palmitoylated Ras proteins. Has weak lysophospholipase activity in vitro; however such activity may not exist in vivo. The sequence is that of Acyl-protein thioesterase 1 from Yarrowia lipolytica (strain CLIB 122 / E 150) (Yeast).